Reading from the N-terminus, the 113-residue chain is Phosphoribosyl-ATP pyrophosphatase (113 aa).

The protein belongs to the PRA-PH family.

The protein localises to the cytoplasm. The catalysed reaction is 1-(5-phospho-beta-D-ribosyl)-ATP + H2O = 1-(5-phospho-beta-D-ribosyl)-5'-AMP + diphosphate + H(+). It functions in the pathway amino-acid biosynthesis; L-histidine biosynthesis; L-histidine from 5-phospho-alpha-D-ribose 1-diphosphate: step 2/9. This chain is Phosphoribosyl-ATP pyrophosphatase, found in Janthinobacterium sp. (strain Marseille) (Minibacterium massiliensis).